Reading from the N-terminus, the 261-residue chain is Undecaprenyl-diphosphatase (261 aa).

The next 8 membrane-spanning stretches (helical) occupy residues 9–31 (ALLLGVVEGLTEFLPVSSTGHLT), 46–66 (FLKTFLVAIQLGAILAVLLLY), 80–100 (IAVAFVPTGVIGFLFYPLIKG), 102–122 (ILGNDAVVAFFLFFVGAVLLF), 137–157 (ALPLARVAWIGVFQGLAALFP), 180–200 (AEFSFLLALPTMFAAVGYDLW), 209–229 (GGWSLLLLGFLAALVTALVTV), and 240–260 (GFRPFALYRMALAAVYAFFFL).

This sequence belongs to the UppP family.

The protein localises to the cell inner membrane. It catalyses the reaction di-trans,octa-cis-undecaprenyl diphosphate + H2O = di-trans,octa-cis-undecaprenyl phosphate + phosphate + H(+). In terms of biological role, catalyzes the dephosphorylation of undecaprenyl diphosphate (UPP). Confers resistance to bacitracin. The polypeptide is Undecaprenyl-diphosphatase (Thermus thermophilus (strain ATCC 27634 / DSM 579 / HB8)).